The sequence spans 252 residues: Imidazole glycerol phosphate synthase subunit HisF (252 aa).

Active-site residues include D11 and D130.

This sequence belongs to the HisA/HisF family. As to quaternary structure, heterodimer of HisH and HisF.

It localises to the cytoplasm. The catalysed reaction is 5-[(5-phospho-1-deoxy-D-ribulos-1-ylimino)methylamino]-1-(5-phospho-beta-D-ribosyl)imidazole-4-carboxamide + L-glutamine = D-erythro-1-(imidazol-4-yl)glycerol 3-phosphate + 5-amino-1-(5-phospho-beta-D-ribosyl)imidazole-4-carboxamide + L-glutamate + H(+). It participates in amino-acid biosynthesis; L-histidine biosynthesis; L-histidine from 5-phospho-alpha-D-ribose 1-diphosphate: step 5/9. IGPS catalyzes the conversion of PRFAR and glutamine to IGP, AICAR and glutamate. The HisF subunit catalyzes the cyclization activity that produces IGP and AICAR from PRFAR using the ammonia provided by the HisH subunit. The chain is Imidazole glycerol phosphate synthase subunit HisF from Staphylococcus epidermidis (strain ATCC 35984 / DSM 28319 / BCRC 17069 / CCUG 31568 / BM 3577 / RP62A).